A 514-amino-acid chain; its full sequence is 2,3-bisphosphoglycerate-independent phosphoglycerate mutase (514 aa).

Residues Asp-14 and Ser-64 each contribute to the Mn(2+) site. Ser-64 serves as the catalytic Phosphoserine intermediate. Residues His-125, Arg-155–Asp-156, Arg-187, Arg-193, Arg-263–Arg-266, and Lys-336 contribute to the substrate site. Mn(2+) is bound by residues Asp-403, His-407, Asp-444, His-445, and His-463.

It belongs to the BPG-independent phosphoglycerate mutase family. Monomer. The cofactor is Mn(2+).

The catalysed reaction is (2R)-2-phosphoglycerate = (2R)-3-phosphoglycerate. It participates in carbohydrate degradation; glycolysis; pyruvate from D-glyceraldehyde 3-phosphate: step 3/5. Functionally, catalyzes the interconversion of 2-phosphoglycerate and 3-phosphoglycerate. The sequence is that of 2,3-bisphosphoglycerate-independent phosphoglycerate mutase from Salmonella paratyphi B (strain ATCC BAA-1250 / SPB7).